The sequence spans 190 residues: ATP synthase subunit C lysine N-methyltransferase (190 aa).

Belongs to the ANT/ATPSC lysine N-methyltransferase family.

It localises to the mitochondrion. It carries out the reaction L-lysyl-[protein] + 3 S-adenosyl-L-methionine = N(6),N(6),N(6)-trimethyl-L-lysyl-[protein] + 3 S-adenosyl-L-homocysteine + 3 H(+). Functionally, mitochondrial protein-lysine N-methyltransferase that trimethylates ATP synthase subunit C. Trimethylation is required for proper incorporation of the C subunit into the ATP synthase complex and mitochondrial respiration. This Caenorhabditis elegans protein is ATP synthase subunit C lysine N-methyltransferase.